We begin with the raw amino-acid sequence, 765 residues long: MPRRPPRVCSGNQPAPVPAMEPATDGLWAHSRAALARLEKLLRCSRCANILKEPVCLGGCEHIFCSGCISDCVGSGCPVCYTPAWILDLKINRQLDSMIQLSSKLQNLLHDNKDSKDNTSRASLFGDAERKKNSIKMWFSPRSKKVRYVVTKVSVQTQPQKAKDDKAQEASMYEFVSATPPVAVPKSAKTASRTSAKKHPKKSVAKINREENLRPETKDSRFDSKEELKEEKVVSCSQIPVMERPRVNGEIDLLASGSVVEPECSGSLTEVSLPLAEHIVSPDTVSKNEETPEKKVCVKDLRSGGSNGNRKGCHRPTTSTSDSCGSNIPSTSRGIGEPALLAENVVLVDCSSLPSGQLQVDVTLRRKSNASDDPLSLSPGTPPPLLNNSTHRQMMSSPSTVKLSSGMPARKRNHRGETLLHIASIKGDIPSVEYLLQNGNDPNVKDHAGWTPLHEACSHGHLKVVELLLQHNALVNTPGYQNDSPLHDAVKSGHIDIVKVLLSHGASRNAVNIFGVRPVDYTDNENIRSLLLLPEENESFSTSQCSIVNTGQRKNGPLVFIGSGLSSQQQKMLSKLETVLKAKKCMEFDSTVTHVIVPDEEAQSTLKCMLGILSGCWILKFDWVKACLDSKVREQEEKYEVPGGPQRSRLNREQLLPKLFDGCYFFLGGNFKHHPRDDLLKLIAAAGGKVLSRKPKPDSDVTQTINTVAYHAKPESDQRFCTQYIVYEDLFNCHPERVRQGKVWMAPSTWLISCIMAFELLPLDS.

Positions 20-113 are required for BRCA1 binding; sequence MEPATDGLWA…KLQNLLHDNK (94 aa). The segment at 44-81 adopts an RING-type zinc-finger fold; it reads CSRCANILKEPVCLGGCEHIFCSGCISDCVGSGCPVCY. K152 participates in a covalent cross-link: Glycyl lysine isopeptide (Lys-Gly) (interchain with G-Cter in SUMO2). Disordered stretches follow at residues 183–229, 299–328, and 369–410; these read AVPK…EELK, KDLR…GSNI, and NASD…MPAR. The span at 195–204 shows a compositional bias: basic residues; sequence SAKKHPKKSV. The segment covering 207-229 has biased composition (basic and acidic residues); it reads INREENLRPETKDSRFDSKEELK. Residues 316-328 show a composition bias toward polar residues; sequence PTTSTSDSCGSNI. A Phosphoserine modification is found at S378. T381 is modified (phosphothreonine). Positions 391–403 are enriched in polar residues; sequence HRQMMSSPSTVKL. K411 is covalently cross-linked (Glycyl lysine isopeptide (Lys-Gly) (interchain with G-Cter in SUMO2)). ANK repeat units lie at residues 415–447, 448–480, and 481–513; these read RGET…VKDH, AGWT…TPGY, and QNDS…AVNI. An ANK 4; degenerate repeat occupies 514-534; the sequence is FGVRPVDYTDNENIRSLLLLP. Residues 542–546 are flexible linker; sequence TSQCS. BRCT domains follow at residues 549 to 641 and 655 to 765; these read NTGQ…KYEV and LLPK…PLDS.

In terms of assembly, homo- and heterodimer. Heterodimer (RING-type zinc finger) with BRCA1. Heterodimer (via ANK repeats and BRCT domains) with CSTF1/CSTF-50. Component of the BRCA1-A complex, at least composed of the BRCA1, BARD1, UIMC1/RAP80, ABRAXAS1, BRCC3/BRCC36, BABAM2 and BABAM1/NBA1. Interacts with UBXN1. In terms of processing, processed during apoptosis. The homodimer is more susceptible to proteolytic cleavage than the BARD1/BRCA1 heterodimer.

Its subcellular location is the nucleus. It is found in the cytoplasm. It catalyses the reaction S-ubiquitinyl-[E2 ubiquitin-conjugating enzyme]-L-cysteine + [acceptor protein]-L-lysine = [E2 ubiquitin-conjugating enzyme]-L-cysteine + N(6)-ubiquitinyl-[acceptor protein]-L-lysine.. It participates in protein modification; protein ubiquitination. In terms of biological role, E3 ubiquitin-protein ligase. The BRCA1-BARD1 heterodimer specifically mediates the formation of 'Lys-6'-linked polyubiquitin chains and coordinates a diverse range of cellular pathways such as DNA damage repair, ubiquitination and transcriptional regulation to maintain genomic stability. Plays a central role in the control of the cell cycle in response to DNA damage. Acts by mediating ubiquitin E3 ligase activity that is required for its tumor suppressor function. Also forms a heterodimer with CSTF1/CSTF-50 to modulate mRNA processing and RNAP II stability by inhibiting pre-mRNA 3' cleavage. This chain is BRCA1-associated RING domain protein 1 (Bard1), found in Mus musculus (Mouse).